The chain runs to 175 residues: Adenine phosphoribosyltransferase (175 aa).

This sequence belongs to the purine/pyrimidine phosphoribosyltransferase family. As to quaternary structure, homodimer.

The protein resides in the cytoplasm. It carries out the reaction AMP + diphosphate = 5-phospho-alpha-D-ribose 1-diphosphate + adenine. Its pathway is purine metabolism; AMP biosynthesis via salvage pathway; AMP from adenine: step 1/1. Functionally, catalyzes a salvage reaction resulting in the formation of AMP, that is energically less costly than de novo synthesis. The chain is Adenine phosphoribosyltransferase from Caldicellulosiruptor bescii (strain ATCC BAA-1888 / DSM 6725 / KCTC 15123 / Z-1320) (Anaerocellum thermophilum).